The following is a 493-amino-acid chain: Vinyl phenol reductase (493 aa).

Positions 19, 38, 46, 50, 52, 156, 224, 448, and 467 each coordinate FAD.

It belongs to the FAD-dependent oxidoreductase 2 family. FRD/SDH subfamily. The cofactor is FAD.

The catalysed reaction is 4-vinylphenol + NADH + H(+) = 4-ethylphenol + NAD(+). The enzyme catalyses 3,4-dihydroxystyrene + NADH + H(+) = 4-ethylcatechol + NAD(+). It catalyses the reaction 2-methoxy-4-vinylphenol + NADH + H(+) = 4-ethyl-2-methoxyphenol + NAD(+). Functionally, involved in the production of ethylphenols during the degradation of hydroxycinnamic acids. Catalyzes the reduction of vinylphenols (4-vinylphenol (4-hydroxystyrene), 4-vinylcatechol (3,4-dihydroxystyrene), and 4-vinylguaiacol (2-methoxy-4-vinylphenol)) to their corresponding ethylphenols (4-ethylphenol, 4-ethylcatechol, and 4-ethylguaiacol, respectively) in the presence of NADH. These compounds are considered the most important flavor components of fermented soy sauce, and, on the other hand, are considered off flavor and responsible for sensorial wine and cider alteration. The 4-ethylphenol produced by the gut bacteria L.plantarum strain WCFS1 can get subsequent sulfation to 4-ethylphenyl sulfate (4EPS) by host sulfotransferase (SULT1A1); 4EPS can enter the brain and seems to alter brain activity. Therefore, this enzyme likely plays a role in gut microbiota-host metabolic interactions. The protein is Vinyl phenol reductase of Lactiplantibacillus plantarum (strain ATCC BAA-793 / NCIMB 8826 / WCFS1) (Lactobacillus plantarum).